We begin with the raw amino-acid sequence, 1228 residues long: MKKKKRSPLFRRLNYFSPIEHHSNKHSQTTREDRDWENVYRNRWQYDKVVRSTHGVNCTGSCSWNIYVKNGIVTWEGQNLNYPSTGPDMPDFEPRGCPRGASFSWYIYSPLRVKYPYVRGVLINLWREALQTHQNPLEAWKSIVENPEKAKSYKQARGKGGFVRAEWPEVLKLISASLLYTVMKYGPDRNVGFSPIPAMSMISHASGSRFMSLIGGPMLSFYDWYADLPPASPQIWGDQTDVPESSDWYNSGYIITWGSNVPLTRTPDAHFLAEARYKGAKVISISPDFAESSKFADDWLSIRQGTDGALAMAMGHVILQEFYVNQETERFIEYAKQYTDFPFLVTLSKENGVYTAGRFLHAKDIGRKTKHDQWKPAVWDEQTSSFAIPQGTMGSRWDGQQKWNLHMIDEETGEPIEPRLSVLGIEDEIGTVRIPYFSNDGNKVLERDLPIKKMNLNGEETYITTVFDLILANYGVNRGIGERSAVSYDDPEPFTPAWQEQMTGIKKEAVVKIAREFAQNAIDTDGRSMIIVGAGINHWFNSDTIYRAVLNLVLLVGAQGVNGGGWAHYVGQEKLRPAEGWQTIATAKDWEGVPKLQNGTSFFYFATDQWRYEDQPISDLASPIAASSRYKHHADYNVLAARLGWLPSYPTFNQNGIDLYKEAEKAGAATPEDVGAYVASQLQEKKLKFAIEDPDNEVNFPRNLFVWRANLISSSGKGHEYFLKHLLGTTNGLMNDDSDSIRPEEIKWREQAPEGKLDLLINLDFRMAGTALYSDIVLPAATWYEKHDLSSTDMHPFIHPFAPAISAPWESKSDWDIFKALSKAVSDLAEEVDMEPVKEVVATPLLHDTMQELAQPFGKINDWSKGECEAIPGKTMPNIQVVERDYKHIFHKMTALGPNVALKPSGTKGMSWSIADEYESLKQRLGEITSDSVAKGCPNISEAKQAAEAILTLSSTSNGKVAVKAWESLENITNLKLKDLAEEREEECFTFEQITAQPKTVITSPAFTGSEKGGRRYSPFTTNVEKLIPWRTLTGRQSYYVDHELMMEFGETMATFKPILQHRPFLSKRPDQEGKEIVLNYLTPHNKWSVHSMYFDSLPMLTLFRGGPTVWMNKDDAEDTDIKDNDWIECFNRNGVVVARAVLSHRIPKGMAFMHHAQDRHINVPGTKLTNNRGGTHNSPTRIHVKPTQMIGGYAQLSYGFNYYGPTGNQRDLNVVIRKLKEVDWLED.

A 4Fe-4S Mo/W bis-MGD-type domain is found at Asp-47–Leu-111. [4Fe-4S] cluster-binding residues include His-54, Cys-58, Cys-62, and Cys-97. Position 227 (Asp-227) interacts with Mo-bis(molybdopterin guanine dinucleotide).

Belongs to the prokaryotic molybdopterin-containing oxidoreductase family. [4Fe-4S] cluster is required as a cofactor. Mo-bis(molybdopterin guanine dinucleotide) serves as cofactor.

It localises to the cell membrane. It carries out the reaction nitrate + a quinol = a quinone + nitrite + H2O. Its function is as follows. The alpha chain is the actual site of nitrate reduction. In Bacillus subtilis (strain 168), this protein is Nitrate reductase alpha chain (narG).